The chain runs to 437 residues: Argininosuccinate lyase (437 aa).

This sequence belongs to the lyase 1 family. Argininosuccinate lyase subfamily.

It localises to the cytoplasm. The enzyme catalyses 2-(N(omega)-L-arginino)succinate = fumarate + L-arginine. It participates in amino-acid biosynthesis; L-arginine biosynthesis; L-arginine from L-ornithine and carbamoyl phosphate: step 3/3. The polypeptide is Argininosuccinate lyase (Clostridium acetobutylicum (strain ATCC 824 / DSM 792 / JCM 1419 / IAM 19013 / LMG 5710 / NBRC 13948 / NRRL B-527 / VKM B-1787 / 2291 / W)).